Reading from the N-terminus, the 419-residue chain is UDP-N-acetylglucosamine 1-carboxyvinyltransferase 2 (419 aa).

24 to 25 is a phosphoenolpyruvate binding site; the sequence is KN. Arginine 94 serves as a coordination point for UDP-N-acetyl-alpha-D-glucosamine. Residue cysteine 118 is the Proton donor of the active site. 2-(S-cysteinyl)pyruvic acid O-phosphothioketal is present on cysteine 118. UDP-N-acetyl-alpha-D-glucosamine contacts are provided by residues 123 to 127, aspartate 307, and isoleucine 329; that span reads RPIDQ.

It belongs to the EPSP synthase family. MurA subfamily.

The protein resides in the cytoplasm. It carries out the reaction phosphoenolpyruvate + UDP-N-acetyl-alpha-D-glucosamine = UDP-N-acetyl-3-O-(1-carboxyvinyl)-alpha-D-glucosamine + phosphate. The protein operates within cell wall biogenesis; peptidoglycan biosynthesis. Functionally, cell wall formation. Adds enolpyruvyl to UDP-N-acetylglucosamine. This chain is UDP-N-acetylglucosamine 1-carboxyvinyltransferase 2, found in Staphylococcus aureus (strain MSSA476).